A 309-amino-acid chain; its full sequence is Olfactory receptor 4B1 (309 aa).

The Extracellular segment spans residues 1–23; that stretch reads MASTSNVTELIFTGLFQDPAVQS. A glycan (N-linked (GlcNAc...) asparagine) is linked at asparagine 6. Residues 24-47 form a helical membrane-spanning segment; that stretch reads VCFVVFLPVYLATVVGNGLIVLTV. The Cytoplasmic segment spans residues 48-55; that stretch reads SISKSLDS. Residues 56-77 form a helical membrane-spanning segment; sequence PMYFFLSCLSLVEISYSSTIAP. The Extracellular portion of the chain corresponds to 78–98; sequence KFIIDLLAKIKTISLEGCLTQ. Cysteines 95 and 187 form a disulfide. Residues 99–118 form a helical membrane-spanning segment; the sequence is IFFFHFFGVAEILLIVVMAY. Topologically, residues 119–137 are cytoplasmic; it reads DCYVAICKPLHYMNIISRQ. The helical transmembrane segment at 138–156 threads the bilayer; the sequence is LCHLLVAGSWLGGFCHSII. The Extracellular segment spans residues 157-193; it reads QILVIIQLPFCGPNVIDHYFCDLQPLFKLACTDTFME. Residues 194-217 traverse the membrane as a helical segment; that stretch reads GVIVLANSGLFSVFSFLILVSSYI. Residues 218-233 are Cytoplasmic-facing; that stretch reads VILVNLRNHSAEGRHK. Residues 234-256 traverse the membrane as a helical segment; the sequence is ALSTCASHITVVILFFGPAIFLY. At 257–267 the chain is on the extracellular side; it reads MRPSSTFTEDK. Residues 268 to 287 form a helical membrane-spanning segment; the sequence is LVAVFYTVITPMLNPIIYTL. Residues 288–309 are Cytoplasmic-facing; that stretch reads RNAEVKIAIRRLWSKKENPGRE.

Belongs to the G-protein coupled receptor 1 family.

It localises to the cell membrane. Functionally, odorant receptor. The polypeptide is Olfactory receptor 4B1 (OR4B1) (Homo sapiens (Human)).